Consider the following 396-residue polypeptide: 1-deoxy-D-xylulose 5-phosphate reductoisomerase (396 aa).

6 residues coordinate NADPH: Thr10, Gly11, Ser12, Ile13, Gln38, and Asn124. Lys125 lines the 1-deoxy-D-xylulose 5-phosphate pocket. Glu126 contacts NADPH. Asp150 contacts Mn(2+). The 1-deoxy-D-xylulose 5-phosphate site is built by Ser151, Glu152, Ser179, and His202. Glu152 contributes to the Mn(2+) binding site. NADPH is bound at residue Gly208. The 1-deoxy-D-xylulose 5-phosphate site is built by Ser215, Asn220, Lys221, and Glu224. Glu224 contributes to the Mn(2+) binding site.

Belongs to the DXR family. The cofactor is Mg(2+). Mn(2+) serves as cofactor.

It catalyses the reaction 2-C-methyl-D-erythritol 4-phosphate + NADP(+) = 1-deoxy-D-xylulose 5-phosphate + NADPH + H(+). The protein operates within isoprenoid biosynthesis; isopentenyl diphosphate biosynthesis via DXP pathway; isopentenyl diphosphate from 1-deoxy-D-xylulose 5-phosphate: step 1/6. Its function is as follows. Catalyzes the NADPH-dependent rearrangement and reduction of 1-deoxy-D-xylulose-5-phosphate (DXP) to 2-C-methyl-D-erythritol 4-phosphate (MEP). This Ralstonia pickettii (strain 12J) protein is 1-deoxy-D-xylulose 5-phosphate reductoisomerase.